The sequence spans 927 residues: Isoleucine--tRNA ligase (927 aa).

Residues 60–70 carry the 'HIGH' region motif; the sequence is PYANGNIHLGH. L-isoleucyl-5'-AMP is bound at residue Glu557. Residues 598-602 carry the 'KMSKS' region motif; sequence KMSKS. Lys601 is an ATP binding site. Positions 895, 898, 915, and 918 each coordinate Zn(2+).

It belongs to the class-I aminoacyl-tRNA synthetase family. IleS type 1 subfamily. In terms of assembly, monomer. It depends on Zn(2+) as a cofactor.

It is found in the cytoplasm. It catalyses the reaction tRNA(Ile) + L-isoleucine + ATP = L-isoleucyl-tRNA(Ile) + AMP + diphosphate. Catalyzes the attachment of isoleucine to tRNA(Ile). As IleRS can inadvertently accommodate and process structurally similar amino acids such as valine, to avoid such errors it has two additional distinct tRNA(Ile)-dependent editing activities. One activity is designated as 'pretransfer' editing and involves the hydrolysis of activated Val-AMP. The other activity is designated 'posttransfer' editing and involves deacylation of mischarged Val-tRNA(Ile). The sequence is that of Isoleucine--tRNA ligase from Syntrophomonas wolfei subsp. wolfei (strain DSM 2245B / Goettingen).